Here is a 101-residue protein sequence, read N- to C-terminus: Chaperone modulatory protein CbpM (101 aa).

The protein belongs to the CbpM family.

In terms of biological role, interacts with CbpA and inhibits both the DnaJ-like co-chaperone activity and the DNA binding activity of CbpA. Together with CbpA, modulates the activity of the DnaK chaperone system. Does not inhibit the co-chaperone activity of DnaJ. The chain is Chaperone modulatory protein CbpM from Pseudomonas putida (strain W619).